The primary structure comprises 127 residues: Fatty acid-binding protein, liver-type (127 aa).

This sequence belongs to the calycin superfamily. Fatty-acid binding protein (FABP) family.

The protein resides in the cytoplasm. The protein is Fatty acid-binding protein, liver-type (fabp1) of Epinephelus coioides (Orange-spotted grouper).